Consider the following 94-residue polypeptide: Large ribosomal subunit protein bL27 (94 aa).

Positions 1–10 (MQFLFNIQLF) are excised as a propeptide.

It belongs to the bacterial ribosomal protein bL27 family. In terms of processing, the N-terminus is cleaved by ribosomal processing cysteine protease Prp.

This chain is Large ribosomal subunit protein bL27, found in Fusobacterium nucleatum subsp. nucleatum (strain ATCC 25586 / DSM 15643 / BCRC 10681 / CIP 101130 / JCM 8532 / KCTC 2640 / LMG 13131 / VPI 4355).